The sequence spans 404 residues: Probable protein phosphatase 2C 30 (404 aa).

The segment covering 42–52 (AERGAEEETSG) has biased composition (basic and acidic residues). The segment at 42–72 (AERGAEEETSGKRRRLDGGGGEASTDEEDRE) is disordered. The 323-residue stretch at 77-399 (RYGFTSVCGR…DNVSVVVVNL (323 aa)) folds into the PPM-type phosphatase domain. Mn(2+)-binding residues include D111, G112, and D298. Residues 321–369 (GRRERNRSSPTSNLSPRQSSSSGDEAPNDGAPSAAAGSESDEESAAEED) are disordered. Residues 330–343 (PTSNLSPRQSSSSG) are compositionally biased toward polar residues. D390 is a Mn(2+) binding site.

It belongs to the PP2C family. Interacts with PYL5 and SAPK2. Binding to PYL5 is dependent on the presence of abscisic acid (ABA). Interacts with PYL3, PYL5 and PYL9. Binding to PYL5 and PYL9 is dependent on the presence of ABA. The cofactor is Mg(2+). Mn(2+) is required as a cofactor.

The protein resides in the nucleus. The catalysed reaction is O-phospho-L-seryl-[protein] + H2O = L-seryl-[protein] + phosphate. It catalyses the reaction O-phospho-L-threonyl-[protein] + H2O = L-threonyl-[protein] + phosphate. Functionally, together with ABI5, PYL5 and SAPK2, is part of an abscisic acid (ABA) signaling unit that modulates seed germination and early seedling growth. This is Probable protein phosphatase 2C 30 from Oryza sativa subsp. japonica (Rice).